Consider the following 534-residue polypeptide: CTP synthase (534 aa).

The interval 1 to 266 (MKQKFIFVTG…DELIVARLGL (266 aa)) is amidoligase domain. Ser-14 contacts CTP. UTP is bound at residue Ser-14. Residues 15 to 20 (SIGKGL) and Asp-72 each bind ATP. Residues Asp-72 and Glu-140 each coordinate Mg(2+). CTP contacts are provided by residues 147 to 149 (DIE), 187 to 192 (KSKPTQ), and Lys-223. Residues 187–192 (KSKPTQ) and Lys-223 each bind UTP. A Glutamine amidotransferase type-1 domain is found at 291 to 534 (KIGVVGKYVD…HFVKASLKKK (244 aa)). Residue Gly-353 coordinates L-glutamine. Catalysis depends on Cys-380, which acts as the Nucleophile; for glutamine hydrolysis. Residues 381-384 (FGMQ), Glu-404, and Arg-464 contribute to the L-glutamine site. Active-site residues include His-509 and Glu-511.

Belongs to the CTP synthase family. As to quaternary structure, homotetramer.

The enzyme catalyses UTP + L-glutamine + ATP + H2O = CTP + L-glutamate + ADP + phosphate + 2 H(+). It catalyses the reaction L-glutamine + H2O = L-glutamate + NH4(+). It carries out the reaction UTP + NH4(+) + ATP = CTP + ADP + phosphate + 2 H(+). It functions in the pathway pyrimidine metabolism; CTP biosynthesis via de novo pathway; CTP from UDP: step 2/2. With respect to regulation, allosterically activated by GTP, when glutamine is the substrate; GTP has no effect on the reaction when ammonia is the substrate. The allosteric effector GTP functions by stabilizing the protein conformation that binds the tetrahedral intermediate(s) formed during glutamine hydrolysis. Inhibited by the product CTP, via allosteric rather than competitive inhibition. In terms of biological role, catalyzes the ATP-dependent amination of UTP to CTP with either L-glutamine or ammonia as the source of nitrogen. Regulates intracellular CTP levels through interactions with the four ribonucleotide triphosphates. In Bdellovibrio bacteriovorus (strain ATCC 15356 / DSM 50701 / NCIMB 9529 / HD100), this protein is CTP synthase.